The primary structure comprises 417 residues: RH-like protein (417 aa).

11 helical membrane-spanning segments follow: residues 12–32 (CLPL…FFFT), 44–64 (LVAS…GLGF), 77–97 (VAFN…LDGF), 125–145 (ISMN…MELV), 172–192 (IHVF…KPLP), 203–223 (TSPS…WPTF), 238–258 (VFST…VSSL), 265–285 (INMT…GASC), 287–307 (VIHS…ISFG), 331–351 (TFGL…ALRV), and 358–378 (MIGF…AMSI).

It belongs to the ammonium transporter (TC 2.A.49) family. Rh subfamily.

The protein resides in the membrane. Its function is as follows. May be part of an oligomeric complex which is likely to have a transport or channel function in the erythrocyte membrane. The chain is RH-like protein from Macaca fascicularis (Crab-eating macaque).